The sequence spans 244 residues: uncharacterized protein (244 aa).

The disordered stretch occupies residues 1–127; that stretch reads MSGPQGSDPR…YPGQYGPYGQ (127 aa). A compositionally biased stretch (polar residues) spans 34–43; that stretch reads WQQQPTQEAT. 2 stretches are compositionally biased toward low complexity: residues 45 to 75 and 88 to 127; these read QAPA…YAQP and PGQY…PYGQ. The chain crosses the membrane as a helical span at residues 136-156; the sequence is VAVIGGVIAVMAVLFIGAVLI.

Its subcellular location is the membrane. This is an uncharacterized protein from Mycobacterium tuberculosis (strain CDC 1551 / Oshkosh).